A 503-amino-acid polypeptide reads, in one-letter code: Probable voltage-gated potassium channel subunit kvs-4 (503 aa).

The Cytoplasmic segment spans residues 1-231 (MNSAIMQGAA…EPASSGKAQA (231 aa)). The Required for dendritic localization motif lies at 217–219 (WNI). Residues 232-252 (FAVCSVVFVLISISGLVLGSL) form a helical membrane-spanning segment. Residues 253–275 (PELQVATKQRNNLTGEEFTEMEP) are Extracellular-facing. N-linked (GlcNAc...) asparagine glycosylation is present at N264. A helical membrane pass occupies residues 276–296 (MPILGYIEYVCIVWFTMEYGL). At 297-313 (KMLVSAERSKTFRQLLN) the chain is on the cytoplasmic side. Residues 314–334 (IIDLLAILPFIIEMLLLIFGI) traverse the membrane as a helical segment. Residues 335-346 (STEQLRDLKGAF) lie on the Extracellular side of the membrane. A helical; Voltage-sensor transmembrane segment spans residues 347-366 (LVIRILRVLRVIRVLKLGRY). Over 367-383 (SSGLQMFGKTLKASFRQ) the chain is Cytoplasmic. The tract at residues 368–383 (SGLQMFGKTLKASFRQ) is S4-S5 linker. The chain crosses the membrane as a helical span at residues 384-404 (LGMMAMVVMTGVIFFSTLVYF). Residues 405-417 (LEKDEPASKFHSI) lie on the Extracellular side of the membrane. The helical intramembrane region spans 418-429 (PAACWWCIVTMT). Residues 430–434 (TVGYG) lie within the membrane without spanning it. The short motif at 430 to 435 (TVGYGD) is the Selectivity filter element. The Extracellular segment spans residues 435–445 (DLTPVTVPGKL). A helical transmembrane segment spans residues 446–466 (VATGAIACGVLVLALPITIIV). Residues 467-503 (DNFMKVAETERPAGGNRYRTSQYPKATKSEQMILKVT) are Cytoplasmic-facing. Positions 496 to 500 (EQMIL) match the Required for dendritic localization motif.

The protein belongs to the potassium channel family. B (Shab) (TC 1.A.1.2) subfamily. Kv2.2/KCNB2 sub-subfamily. In terms of assembly, homotetramer or heterotetramer. Interacts with unc-101 (via N-terminus); which targets kvs-4 to dendrites. As to expression, expressed in the cholinergic motor neuron DA9, mechanosensory neurons ALM and PLM, and the interneuron PVPL.

Its subcellular location is the cell membrane. It is found in the perikaryon. It localises to the cell projection. The protein resides in the axon. The protein localises to the dendrite. Functionally, voltage-gated potassium channel that mediates transmembrane potassium transport in excitable membranes. The chain is Probable voltage-gated potassium channel subunit kvs-4 from Caenorhabditis elegans.